Reading from the N-terminus, the 553-residue chain is HTH-type transcriptional regulator SgrR (553 aa).

Positions 1-117 (MSTARLQQQF…LSQLGRSFRQ (117 aa)) constitute an HTH marR-type domain. The H-T-H motif DNA-binding region spans 26–49 (LQELAEVLCCSRRHVRSLLGSMQQ). The solute-binding stretch occupies residues 163–494 (ELEPDLSHHW…EELHQDVELW (332 aa)).

Its function is as follows. Activates the small RNA gene sgrS under glucose-phosphate stress conditions as well as yfdZ. Represses its own transcription under both stress and non-stress conditions. Might act as a sensor of the intracellular accumulation of phosphoglucose by binding these molecules in its C-terminal solute-binding domain. This is HTH-type transcriptional regulator SgrR from Yersinia enterocolitica serotype O:8 / biotype 1B (strain NCTC 13174 / 8081).